Here is a 72-residue protein sequence, read N- to C-terminus: MARITVDDCLKRIPNRFDLTLAAAYRARQIANGAQLLIDSNAGSKDKPTVVALREIAAGQIGREVLERAIRS.

The protein belongs to the RNA polymerase subunit omega family. As to quaternary structure, the RNAP catalytic core consists of 2 alpha, 1 beta, 1 beta' and 1 omega subunit. When a sigma factor is associated with the core the holoenzyme is formed, which can initiate transcription.

The enzyme catalyses RNA(n) + a ribonucleoside 5'-triphosphate = RNA(n+1) + diphosphate. Its function is as follows. Promotes RNA polymerase assembly. Latches the N- and C-terminal regions of the beta' subunit thereby facilitating its interaction with the beta and alpha subunits. This Laribacter hongkongensis (strain HLHK9) protein is DNA-directed RNA polymerase subunit omega.